A 159-amino-acid polypeptide reads, in one-letter code: Putative ribosomal RNA large subunit methyltransferase H (159 aa).

Residues leucine 76, glycine 108, and 127–132 (FSKMTF) each bind S-adenosyl-L-methionine.

The protein belongs to the RNA methyltransferase RlmH family.

It is found in the cytoplasm. The enzyme catalyses pseudouridine(1915) in 23S rRNA + S-adenosyl-L-methionine = N(3)-methylpseudouridine(1915) in 23S rRNA + S-adenosyl-L-homocysteine + H(+). Specifically methylates the pseudouridine at position 1915 (m3Psi1915) in 23S rRNA. In Methanococcus maripaludis (strain C7 / ATCC BAA-1331), this protein is Putative ribosomal RNA large subunit methyltransferase H.